The following is a 258-amino-acid chain: Phosphate import ATP-binding protein PstB 3 (258 aa).

Positions 10–253 (MTARSLAVHY…PANSLTQGYI (244 aa)) constitute an ABC transporter domain. 42–49 (GPSGCGKS) lines the ATP pocket.

The protein belongs to the ABC transporter superfamily. Phosphate importer (TC 3.A.1.7) family. The complex is composed of two ATP-binding proteins (PstB), two transmembrane proteins (PstC and PstA) and a solute-binding protein (PstS).

The protein localises to the cell inner membrane. It carries out the reaction phosphate(out) + ATP + H2O = ADP + 2 phosphate(in) + H(+). In terms of biological role, part of the ABC transporter complex PstSACB involved in phosphate import. Responsible for energy coupling to the transport system. The sequence is that of Phosphate import ATP-binding protein PstB 3 from Paramagnetospirillum magneticum (strain ATCC 700264 / AMB-1) (Magnetospirillum magneticum).